The primary structure comprises 156 residues: Small ribosomal subunit protein uS15 (156 aa).

A disordered region spans residues 1–67 (MARMHTRRRG…GVQGTPIPDV (67 aa)). A compositionally biased stretch (basic and acidic residues) spans 10 to 19 (GSSDSDKPAA). Positions 21-32 (EPPEWSDVDEDA) are enriched in acidic residues.

It belongs to the universal ribosomal protein uS15 family. In terms of assembly, part of the 30S ribosomal subunit.

The sequence is that of Small ribosomal subunit protein uS15 from Haloarcula marismortui (strain ATCC 43049 / DSM 3752 / JCM 8966 / VKM B-1809) (Halobacterium marismortui).